A 439-amino-acid polypeptide reads, in one-letter code: GTPase Der (439 aa).

EngA-type G domains follow at residues 4–168 and 177–352; these read PIVA…KDDE and INIA…DNYT. Residues 10 to 17, 57 to 61, 120 to 123, 183 to 190, 230 to 234, and 295 to 298 each bind GTP; these read GRPNVGKS, DTGGI, NKID, GKPNVGKS, DTAGL, and NKWD. Positions 353 to 437 constitute a KH-like domain; the sequence is KRVKTGVLND…GIKLEFRERK (85 aa).

Belongs to the TRAFAC class TrmE-Era-EngA-EngB-Septin-like GTPase superfamily. EngA (Der) GTPase family. As to quaternary structure, associates with the 50S ribosomal subunit.

Functionally, GTPase that plays an essential role in the late steps of ribosome biogenesis. In Clostridium botulinum (strain Langeland / NCTC 10281 / Type F), this protein is GTPase Der.